The following is a 318-amino-acid chain: MINIWTEKYRPKRLDDVIGEDENINTLKSFVKNGDLPHLIFAGPAGTGKTSTAIALTIELFGDDWKENFLELNASDERGIDIIRNNIKDFAKIRPSNKLGFKIIFLDEADQLTNEAQAALRRTMEMFYSTTRFIFSCNYSSKIIPPIQSRCVVLRFRPLDKEAMERKLREIAKNEKFDIDDDSLDAIYEISDGDMRKAINVMQAIQSTGEIKPSKIYEISGEINKNEYKNLISLSLNGAFSDAKSLLDKMLVDYGLSGIDIIRGMHSAIRNERIANRQKLEILIALAEFEFRISQGGSDNVQMDALLARISYIGSEIT.

An ATP-binding site is contributed by 43–50 (GPAGTGKT).

Belongs to the activator 1 small subunits family. RfcS subfamily. As to quaternary structure, heteromultimer composed of small subunits (RfcS) and large subunits (RfcL).

Part of the RFC clamp loader complex which loads the PCNA sliding clamp onto DNA. The protein is Replication factor C small subunit of Picrophilus torridus (strain ATCC 700027 / DSM 9790 / JCM 10055 / NBRC 100828 / KAW 2/3).